The sequence spans 268 residues: 3-deoxy-manno-octulosonate cytidylyltransferase (268 aa).

Belongs to the KdsB family.

It is found in the cytoplasm. It carries out the reaction 3-deoxy-alpha-D-manno-oct-2-ulosonate + CTP = CMP-3-deoxy-beta-D-manno-octulosonate + diphosphate. Its pathway is nucleotide-sugar biosynthesis; CMP-3-deoxy-D-manno-octulosonate biosynthesis; CMP-3-deoxy-D-manno-octulosonate from 3-deoxy-D-manno-octulosonate and CTP: step 1/1. It participates in bacterial outer membrane biogenesis; lipopolysaccharide biosynthesis. Functionally, activates KDO (a required 8-carbon sugar) for incorporation into bacterial lipopolysaccharide in Gram-negative bacteria. The polypeptide is 3-deoxy-manno-octulosonate cytidylyltransferase (Ralstonia nicotianae (strain ATCC BAA-1114 / GMI1000) (Ralstonia solanacearum)).